The primary structure comprises 60 residues: Prophage outer membrane lipoprotein RzoD (60 aa).

The signal sequence occupies residues 1-19 (MRKLKMMLCVMMLPLVVVG). C20 carries N-palmitoyl cysteine lipidation. C20 carries S-diacylglycerol cysteine lipidation.

Belongs to the lambdalikevirus o-spanin family. Homodimer; disulfide-linked. Interacts (via C-terminus) with RZ (via C-terminus). Part of the spanin complex which spans the entire periplasmic space. The spanin complex is composed of spanin, inner membrane subunit and spanin, outer membrane subunit.

The protein localises to the cell outer membrane. Its function is as follows. Component of the spanin complex that disrupts the outer membrane and causes cell lysis during virus exit. The spanin complex conducts the final step in cell lysis by disrupting the outer membrane after holin and endolysin action have permeabilized the inner membrane and degraded the host peptidoglycans. The protein is Prophage outer membrane lipoprotein RzoD (rzoD) of Escherichia coli (strain K12).